A 318-amino-acid chain; its full sequence is Ribonuclease Z (318 aa).

Residues histidine 63, histidine 65, aspartate 67, histidine 68, histidine 142, aspartate 210, and histidine 268 each coordinate Zn(2+). Aspartate 67 functions as the Proton acceptor in the catalytic mechanism.

It belongs to the RNase Z family. As to quaternary structure, homodimer. It depends on Zn(2+) as a cofactor.

It carries out the reaction Endonucleolytic cleavage of RNA, removing extra 3' nucleotides from tRNA precursor, generating 3' termini of tRNAs. A 3'-hydroxy group is left at the tRNA terminus and a 5'-phosphoryl group is left at the trailer molecule.. Zinc phosphodiesterase, which displays some tRNA 3'-processing endonuclease activity. Probably involved in tRNA maturation, by removing a 3'-trailer from precursor tRNA. The polypeptide is Ribonuclease Z (Thermobifida fusca (strain YX)).